A 256-amino-acid chain; its full sequence is tRNA-cytidine(32) 2-sulfurtransferase (256 aa).

The PP-loop motif motif lies at 35–40 (SGGKDS). Positions 110, 113, and 201 each coordinate [4Fe-4S] cluster.

This sequence belongs to the TtcA family. As to quaternary structure, homodimer. Requires Mg(2+) as cofactor. The cofactor is [4Fe-4S] cluster.

Its subcellular location is the cytoplasm. The catalysed reaction is cytidine(32) in tRNA + S-sulfanyl-L-cysteinyl-[cysteine desulfurase] + AH2 + ATP = 2-thiocytidine(32) in tRNA + L-cysteinyl-[cysteine desulfurase] + A + AMP + diphosphate + H(+). It functions in the pathway tRNA modification. Catalyzes the ATP-dependent 2-thiolation of cytidine in position 32 of tRNA, to form 2-thiocytidine (s(2)C32). The sulfur atoms are provided by the cysteine/cysteine desulfurase (IscS) system. This is tRNA-cytidine(32) 2-sulfurtransferase from Coxiella burnetii (strain Dugway 5J108-111).